We begin with the raw amino-acid sequence, 352 residues long: 3-isopropylmalate dehydrogenase (352 aa).

71–87 (GAHDSAWNQLPRHLRPE) is a binding site for NAD(+). The substrate site is built by arginine 94, arginine 104, arginine 132, and aspartate 218. Positions 218, 242, and 246 each coordinate Mg(2+). 275–287 (GSAPDIAGQGVAN) contributes to the NAD(+) binding site.

It belongs to the isocitrate and isopropylmalate dehydrogenases family. LeuB type 1 subfamily. As to quaternary structure, homodimer. Mg(2+) serves as cofactor. Requires Mn(2+) as cofactor.

It is found in the cytoplasm. The enzyme catalyses (2R,3S)-3-isopropylmalate + NAD(+) = 4-methyl-2-oxopentanoate + CO2 + NADH. It functions in the pathway amino-acid biosynthesis; L-leucine biosynthesis; L-leucine from 3-methyl-2-oxobutanoate: step 3/4. Its function is as follows. Catalyzes the oxidation of 3-carboxy-2-hydroxy-4-methylpentanoate (3-isopropylmalate) to 3-carboxy-4-methyl-2-oxopentanoate. The product decarboxylates to 4-methyl-2 oxopentanoate. The sequence is that of 3-isopropylmalate dehydrogenase from Deinococcus radiodurans (strain ATCC 13939 / DSM 20539 / JCM 16871 / CCUG 27074 / LMG 4051 / NBRC 15346 / NCIMB 9279 / VKM B-1422 / R1).